A 456-amino-acid polypeptide reads, in one-letter code: Bifunctional protein GlmU (456 aa).

Residues 1 to 231 (MERTCLAIIL…EEELTGCNTR (231 aa)) form a pyrophosphorylase region. UDP-N-acetyl-alpha-D-glucosamine-binding positions include 10 to 13 (LAAG), Lys24, Gln77, and 82 to 83 (GT). Residue Asp107 coordinates Mg(2+). The UDP-N-acetyl-alpha-D-glucosamine site is built by Gly143, Glu157, Asn172, and Asn229. Asn229 is a Mg(2+) binding site. The interval 232-252 (AELAYIERLWQQRRRHELMLA) is linker. The tract at residues 253–456 (GVSMVAPETV…LARKIAKAAE (204 aa)) is N-acetyltransferase. Arg318 and Lys336 together coordinate UDP-N-acetyl-alpha-D-glucosamine. His348 (proton acceptor) is an active-site residue. Residues Tyr351 and Asn362 each coordinate UDP-N-acetyl-alpha-D-glucosamine. Acetyl-CoA is bound by residues Ala365, 371-372 (NY), Ser390, Ser408, and Arg425.

It in the N-terminal section; belongs to the N-acetylglucosamine-1-phosphate uridyltransferase family. In the C-terminal section; belongs to the transferase hexapeptide repeat family. In terms of assembly, homotrimer. Mg(2+) serves as cofactor.

Its subcellular location is the cytoplasm. The enzyme catalyses alpha-D-glucosamine 1-phosphate + acetyl-CoA = N-acetyl-alpha-D-glucosamine 1-phosphate + CoA + H(+). It carries out the reaction N-acetyl-alpha-D-glucosamine 1-phosphate + UTP + H(+) = UDP-N-acetyl-alpha-D-glucosamine + diphosphate. It participates in nucleotide-sugar biosynthesis; UDP-N-acetyl-alpha-D-glucosamine biosynthesis; N-acetyl-alpha-D-glucosamine 1-phosphate from alpha-D-glucosamine 6-phosphate (route II): step 2/2. Its pathway is nucleotide-sugar biosynthesis; UDP-N-acetyl-alpha-D-glucosamine biosynthesis; UDP-N-acetyl-alpha-D-glucosamine from N-acetyl-alpha-D-glucosamine 1-phosphate: step 1/1. The protein operates within bacterial outer membrane biogenesis; LPS lipid A biosynthesis. In terms of biological role, catalyzes the last two sequential reactions in the de novo biosynthetic pathway for UDP-N-acetylglucosamine (UDP-GlcNAc). The C-terminal domain catalyzes the transfer of acetyl group from acetyl coenzyme A to glucosamine-1-phosphate (GlcN-1-P) to produce N-acetylglucosamine-1-phosphate (GlcNAc-1-P), which is converted into UDP-GlcNAc by the transfer of uridine 5-monophosphate (from uridine 5-triphosphate), a reaction catalyzed by the N-terminal domain. This chain is Bifunctional protein GlmU, found in Sinorhizobium medicae (strain WSM419) (Ensifer medicae).